Reading from the N-terminus, the 83-residue chain is Small ribosomal subunit protein bS16 (83 aa).

The protein belongs to the bacterial ribosomal protein bS16 family.

The sequence is that of Small ribosomal subunit protein bS16 from Cupriavidus taiwanensis (strain DSM 17343 / BCRC 17206 / CCUG 44338 / CIP 107171 / LMG 19424 / R1) (Ralstonia taiwanensis (strain LMG 19424)).